We begin with the raw amino-acid sequence, 633 residues long: Extracellular metalloproteinase 3 (633 aa).

An N-terminal signal peptide occupies residues 1–18 (MHGLLLAGLLALPMNVLA). The propeptide occupies 19–246 (HPAEQHASNV…VHNVVDYVAS (228 aa)). A glycan (N-linked (GlcNAc...) asparagine) is linked at N410. H429 contributes to the Zn(2+) binding site. Residue E430 is part of the active site. Residue H433 coordinates Zn(2+). N480 and N622 each carry an N-linked (GlcNAc...) asparagine glycan.

It belongs to the peptidase M36 family. The cofactor is Zn(2+).

The protein localises to the secreted. Secreted metalloproteinase probably acting as a virulence factor. The sequence is that of Extracellular metalloproteinase 3 (MEP3) from Trichophyton equinum (Horse ringworm fungus).